Consider the following 426-residue polypeptide: MTSATTTEATAKDLQEKLSLKENDVVEDDGKVEENDAAEEGASNGEKKKKKKKKSSKKKKTPQEQTNPPTVGLSKIFVNKKYPVGEVCDYAEDNLWRTTDEEKRALDRQNFDQYNDLRRAAEVHRQARQYAQSVIKPGMSMMDVVNTIENTTRALVEEDGLKSGIGFPTGVSLNHCAAHYTPNAGDTTILKEKDVMKVDIGVHVNGRIVDSAFTMSFDPQYDNLLAAVKAATNKGIEEAGIDARLNEIGEAIQEVMESYEVEINGKTHQVKSIRNLCGHNLDPYIIHGGKSVPIVKGGEEIKMEEGEIFAIETFGSTGRGVVHEDMECSHYAKIPDAGHIPLRLPRAKALLNTITQNFGTLPFCRRYLDRIGESKYLLALNNLVSAGIVQDYPPLCDIRGSYTAQFEHTIILHPTQKEVVSRGDDY.

The interval 1 to 72 (MTSATTTEAT…QEQTNPPTVG (72 aa)) is disordered. Positions 10 to 34 (TAKDLQEKLSLKENDVVEDDGKVEE) are enriched in basic and acidic residues. Over residues 47–60 (KKKKKKKKSSKKKK) the composition is skewed to basic residues. Residue H179 participates in substrate binding. A divalent metal cation contacts are provided by D199, D210, and H279. Residue H287 participates in substrate binding. Residues E312 and E407 each contribute to the a divalent metal cation site.

It belongs to the peptidase M24A family. Methionine aminopeptidase eukaryotic type 2 subfamily. The cofactor is Co(2+). Zn(2+) is required as a cofactor. Requires Mn(2+) as cofactor. It depends on Fe(2+) as a cofactor.

The protein localises to the cytoplasm. The enzyme catalyses Release of N-terminal amino acids, preferentially methionine, from peptides and arylamides.. Cotranslationally removes the N-terminal methionine from nascent proteins. The N-terminal methionine is often cleaved when the second residue in the primary sequence is small and uncharged (Met-Ala-, Cys, Gly, Pro, Ser, Thr, or Val). The chain is Methionine aminopeptidase 2 (fma2) from Schizosaccharomyces pombe (strain 972 / ATCC 24843) (Fission yeast).